Here is a 616-residue protein sequence, read N- to C-terminus: Chaperone protein HscA homolog (616 aa).

The protein belongs to the heat shock protein 70 family.

Chaperone involved in the maturation of iron-sulfur cluster-containing proteins. Has a low intrinsic ATPase activity which is markedly stimulated by HscB. This is Chaperone protein HscA homolog from Histophilus somni (strain 2336) (Haemophilus somnus).